Here is a 468-residue protein sequence, read N- to C-terminus: MPSAQDYIVRDIGLADFGRKEIAIAETEMPGLMAVRREYAASQPLKGAKIAGSLHMTIQTAVLIETLKALGADIRWVSCNIYSTQDHAAAAIAAAGIPVFAVKGETLTEYWDYTAKLFEWHDGGMPNMILDDGGDATMFVHAGLRAERGDAVFLDKPGSEEEEIFFALIKRMLKEKPQGWFAGLAESIKGVSEETTTGVHRLYLLAREGKLLFPAINVNDSVTKSKFDNLYGCRESLVDGIRRGTDVMMAGKVAMVAGFGDVGKGSAASLRNAGCRVLVSEVDPICALQAAMEGYEVTTMEDAAPRADIFVTATGNKDVITLDHMRAMKDRAIVCNIGHFDNEIQVAGLRNLKWTNIKPQVDEIEFADGHRIILLSEGRLVNLGNAMGHPSFVMSASFTNQTLAQIELWTNQGKYDRQVYTLPKALDEKVAALHLEKIGVKLTKLRPDQAAYIGVSENGPFKPDHYRY.

Residues Thr-57, Asp-132, and Glu-194 each coordinate substrate. 195–197 (TTT) lines the NAD(+) pocket. 2 residues coordinate substrate: Lys-224 and Asp-228. NAD(+)-binding positions include Asn-229, 258–263 (GFGDVG), Glu-281, Asn-316, 337–339 (IGH), and Asn-382.

Belongs to the adenosylhomocysteinase family. Requires NAD(+) as cofactor.

The protein resides in the cytoplasm. The enzyme catalyses S-adenosyl-L-homocysteine + H2O = L-homocysteine + adenosine. The protein operates within amino-acid biosynthesis; L-homocysteine biosynthesis; L-homocysteine from S-adenosyl-L-homocysteine: step 1/1. May play a key role in the regulation of the intracellular concentration of adenosylhomocysteine. The protein is Adenosylhomocysteinase of Methylobacterium nodulans (strain LMG 21967 / CNCM I-2342 / ORS 2060).